Here is a 95-residue protein sequence, read N- to C-terminus: Large ribosomal subunit protein bL27 (95 aa).

Residues 1–21 form a disordered region; the sequence is MAHKKGASSSRNGRDSNAQRL. The segment covering 7 to 19 has biased composition (polar residues); the sequence is ASSSRNGRDSNAQ.

The protein belongs to the bacterial ribosomal protein bL27 family.

This Parafrankia sp. (strain EAN1pec) protein is Large ribosomal subunit protein bL27.